Reading from the N-terminus, the 509-residue chain is MKRALISVSDKNGIVPFAEKLVELGVEIISTGGTKAAFEQAGVPVTGIEEVTEFPEMLDGRVKTLHPAIHGGLLARRDTAEHMEAIAAHDIKPIDLVVVNLYPFQETIQKSGVTLEEAIENIDIGGPSMLRSAAKNYAAVTVVVDTADYDTVLTELEEHGATTFETRQRLAAKVFRHTAAYDALIAEYLTNITGETFPEKVTLTYNRKQVLRYGENPHQDAAFYTEPGTVENSISSAKQLHGKELSYNNIRDADAALKIASEFTEPVAVAVKHMNPCGVGVGENIEEAYLKAYEADETSIFGGIVALNKEVDAKTAEHMSKIFLEIIIAPSFSEEAFAILAKKKNIRLLTVPFAGSVKGFEKTSVNGGLLIQASDSVIEDTASYEVVTEKQPTEAEMKALIAQWKIVKHVKSNAIVVGSDKQTLGIGAGQMNRIGSALIALKQAGEKAKGAVLASDAFFPMDDTVEAAAKAGITAIIQPGGSIKDKESIEMANKYGISMVLTHVRHFKH.

One can recognise an MGS-like domain in the interval 1–144 (MKRALISVSD…KNYAAVTVVV (144 aa)).

It belongs to the PurH family.

It carries out the reaction (6R)-10-formyltetrahydrofolate + 5-amino-1-(5-phospho-beta-D-ribosyl)imidazole-4-carboxamide = 5-formamido-1-(5-phospho-D-ribosyl)imidazole-4-carboxamide + (6S)-5,6,7,8-tetrahydrofolate. The catalysed reaction is IMP + H2O = 5-formamido-1-(5-phospho-D-ribosyl)imidazole-4-carboxamide. It participates in purine metabolism; IMP biosynthesis via de novo pathway; 5-formamido-1-(5-phospho-D-ribosyl)imidazole-4-carboxamide from 5-amino-1-(5-phospho-D-ribosyl)imidazole-4-carboxamide (10-formyl THF route): step 1/1. It functions in the pathway purine metabolism; IMP biosynthesis via de novo pathway; IMP from 5-formamido-1-(5-phospho-D-ribosyl)imidazole-4-carboxamide: step 1/1. The polypeptide is Bifunctional purine biosynthesis protein PurH (Listeria monocytogenes serotype 4b (strain F2365)).